The primary structure comprises 230 residues: Large ribosomal subunit protein uL1 (230 aa).

This sequence belongs to the universal ribosomal protein uL1 family. In terms of assembly, part of the 50S ribosomal subunit.

Functionally, binds directly to 23S rRNA. The L1 stalk is quite mobile in the ribosome, and is involved in E site tRNA release. Its function is as follows. Protein L1 is also a translational repressor protein, it controls the translation of the L11 operon by binding to its mRNA. The sequence is that of Large ribosomal subunit protein uL1 from Rhodopseudomonas palustris (strain BisA53).